The following is a 205-amino-acid chain: Large ribosomal subunit protein uL4 (205 aa).

This sequence belongs to the universal ribosomal protein uL4 family. In terms of assembly, part of the 50S ribosomal subunit. Contacts proteins L15 and L34.

One of the primary rRNA binding proteins, this protein initially binds near the 5'-end of the 23S rRNA. It is important during the early stages of 50S assembly. In terms of biological role, makes multiple contacts with different domains of the 23S rRNA in the assembled 50S subunit. Functionally, this protein is located close to the polypeptide exit tunnel, and interacts with the modified macrolide azithromycin, which blocks the tunnel. The chain is Large ribosomal subunit protein uL4 (rplD) from Deinococcus radiodurans (strain ATCC 13939 / DSM 20539 / JCM 16871 / CCUG 27074 / LMG 4051 / NBRC 15346 / NCIMB 9279 / VKM B-1422 / R1).